We begin with the raw amino-acid sequence, 202 residues long: Putative NADH dehydrogenase/NAD(P)H nitroreductase SCO7141 (202 aa).

Belongs to the nitroreductase family. HadB/RutE subfamily. FMN serves as cofactor.

In Streptomyces coelicolor (strain ATCC BAA-471 / A3(2) / M145), this protein is Putative NADH dehydrogenase/NAD(P)H nitroreductase SCO7141.